A 142-amino-acid chain; its full sequence is Large ribosomal subunit protein uL11 (142 aa).

The protein belongs to the universal ribosomal protein uL11 family. In terms of assembly, part of the ribosomal stalk of the 50S ribosomal subunit. Interacts with L10 and the large rRNA to form the base of the stalk. L10 forms an elongated spine to which L12 dimers bind in a sequential fashion forming a multimeric L10(L12)X complex. Post-translationally, one or more lysine residues are methylated.

Functionally, forms part of the ribosomal stalk which helps the ribosome interact with GTP-bound translation factors. The sequence is that of Large ribosomal subunit protein uL11 from Mycolicibacterium gilvum (strain PYR-GCK) (Mycobacterium gilvum (strain PYR-GCK)).